The sequence spans 295 residues: Tyrosine recombinase XerC (295 aa).

One can recognise a Core-binding (CB) domain in the interval Met1–Val85. In terms of domain architecture, Tyr recombinase spans His106 to Asp285. Residues Arg145, Lys169, His237, Arg240, and His263 contribute to the active site. The active-site O-(3'-phospho-DNA)-tyrosine intermediate is the Tyr272.

Belongs to the 'phage' integrase family. XerC subfamily. In terms of assembly, forms a cyclic heterotetrameric complex composed of two molecules of XerC and two molecules of XerD.

It localises to the cytoplasm. Functionally, site-specific tyrosine recombinase, which acts by catalyzing the cutting and rejoining of the recombining DNA molecules. The XerC-XerD complex is essential to convert dimers of the bacterial chromosome into monomers to permit their segregation at cell division. It also contributes to the segregational stability of plasmids. The sequence is that of Tyrosine recombinase XerC from Haemophilus influenzae (strain PittEE).